Reading from the N-terminus, the 668-residue chain is Probable serine/threonine-protein kinase abkB (668 aa).

Disordered regions lie at residues 88 to 111 and 132 to 162; these read YTNI…KTTA and EVEE…DDNK. The span at 91–105 shows a compositional bias: polar residues; that stretch reads IGGTSPNRQSVPENS. A coiled-coil region spans residues 131 to 163; that stretch reads KEVEEEIIDKNERGKEQEQENKQQKEQKDDNKS. A compositionally biased stretch (basic and acidic residues) spans 138–162; that stretch reads IDKNERGKEQEQENKQQKEQKDDNK. A Protein kinase domain is found at 314–668; that stretch reads DFERLPINSA…EIPSTYHHHH (355 aa). ATP is bound by residues 320 to 328 and K346; that span reads INSASLAQV. D478 functions as the Proton acceptor in the catalytic mechanism.

It belongs to the protein kinase superfamily. ADCK protein kinase family.

This is Probable serine/threonine-protein kinase abkB (abkB) from Dictyostelium discoideum (Social amoeba).